The chain runs to 349 residues: Interferon regulatory factor 2 (349 aa).

Residues 5-113 (RMRMRPWLEE…NAFRVYRMLP (109 aa)) constitute a DNA-binding region (IRF tryptophan pentad repeat). N6-acetyllysine occurs at positions 75 and 78. The segment at 117–148 (RPSKKGKKPKTEKEDKVKHIKQEPVESSLGLS) is disordered. The span at 125–140 (PKTEKEDKVKHIKQEP) shows a compositional bias: basic and acidic residues. Lys-137 participates in a covalent cross-link: Glycyl lysine isopeptide (Lys-Gly) (interchain with G-Cter in SUMO); alternate. A Glycyl lysine isopeptide (Lys-Gly) (interchain with G-Cter in SUMO2); alternate cross-link involves residue Lys-137. A Glycyl lysine isopeptide (Lys-Gly) (interchain with G-Cter in SUMO) cross-link involves residue Lys-166. Ser-225 is subject to Phosphoserine. The segment covering 228–239 (SSYAESETTDSV) has biased composition (polar residues). The tract at residues 228 to 251 (SSYAESETTDSVPSDEESAEGRPH) is disordered. Lys-260 participates in a covalent cross-link: Glycyl lysine isopeptide (Lys-Gly) (interchain with G-Cter in SUMO2). Lys-293 participates in a covalent cross-link: Glycyl lysine isopeptide (Lys-Gly) (interchain with G-Cter in SUMO). A disordered region spans residues 297–349 (NPVPYNSSWPPFQDLPLSSSMTPASSSSRPDRETRASVIKKTSDITQARVKSC). Residues 314-324 (SSSMTPASSSS) are compositionally biased toward low complexity.

The protein belongs to the IRF family. As to quaternary structure, interacts with BRD7, IRF2BP1 and IRF2BP2. Interacts with CREBBP in growing cells; the interaction acetylates IRF2 and regulates IRF2-dependent H4 promoter activity. In terms of processing, acetylated by CBP/ p300 during cell-growth. Acetylation on Lys-75 is required for stimulation of H4 promoter activity. The major sites of sumoylation are Lys-137 and Lys-293. Sumoylation with SUMO1 increases its transcriptional repressor activity on IRF1 and diminishes its ability to activate ISRE and H4 promoter. In terms of tissue distribution, expressed throughout the epithelium of the colon. Also expressed in lamina propria.

It localises to the nucleus. Specifically binds to the upstream regulatory region of type I IFN and IFN-inducible MHC class I genes (the interferon consensus sequence (ICS)) and represses those genes. Also acts as an activator for several genes including H4 and IL7. Constitutively binds to the ISRE promoter to activate IL7. Involved in cell cycle regulation through binding the site II (HiNF-M) promoter region of H4 and activating transcription during cell growth. Antagonizes IRF1 transcriptional activation. The sequence is that of Interferon regulatory factor 2 (IRF2) from Homo sapiens (Human).